Consider the following 632-residue polypeptide: Probable potassium transport system protein Kup (632 aa).

12 consecutive transmembrane segments (helical) span residues 19 to 39 (LLCL…PLYV), 57 to 77 (VIGI…LKYV), 111 to 131 (ILFL…VITP), 147 to 167 (PLLQ…LFML), 175 to 195 (IGAL…LVGL), 213 to 233 (AFAF…AVVL), 257 to 277 (WYGG…ALLL), 286 to 306 (PFFL…ATAA), 347 to 367 (IYIP…VLGF), 376 to 396 (AYGV…FFVL), 404 to 424 (FLLG…FFSA), and 429 to 449 (VAQG…IMIT).

It belongs to the HAK/KUP transporter (TC 2.A.72) family.

It localises to the cell inner membrane. The catalysed reaction is K(+)(in) + H(+)(in) = K(+)(out) + H(+)(out). Functionally, transport of potassium into the cell. Likely operates as a K(+):H(+) symporter. This is Probable potassium transport system protein Kup from Nitrosospira multiformis (strain ATCC 25196 / NCIMB 11849 / C 71).